A 615-amino-acid polypeptide reads, in one-letter code: Leucine aminopeptidase 2 (615 aa).

A peptide contacts are provided by residues 139–141 and 271–276; these read QCQ and PYGGME. Residue His300 coordinates Zn(2+). The active-site Proton acceptor is Glu301. Residues His304 and Glu323 each contribute to the Zn(2+) site. The active-site Proton donor is the Tyr386.

The protein belongs to the peptidase M1 family. It depends on Zn(2+) as a cofactor.

It localises to the cytoplasm. Its subcellular location is the nucleus. The catalysed reaction is an epoxide + H2O = an ethanediol. Its function is as follows. Aminopeptidase that preferentially cleaves di- and tripeptides. Also has low epoxide hydrolase activity (in vitro). Can hydrolyze the epoxide leukotriene LTA(4) but it forms preferentially 5,6-dihydroxy-7,9,11,14-eicosatetraenoic acid rather than the cytokine leukotriene B(4) as the product compared to the homologous mammalian enzyme (in vitro). The sequence is that of Leucine aminopeptidase 2 from Aspergillus oryzae (strain ATCC 42149 / RIB 40) (Yellow koji mold).